A 79-amino-acid polypeptide reads, in one-letter code: Large ribosomal subunit protein uL29 (79 aa).

It belongs to the universal ribosomal protein uL29 family.

This is Large ribosomal subunit protein uL29 from Nocardia farcinica (strain IFM 10152).